Reading from the N-terminus, the 366-residue chain is MAIISSKKQPPEPNGEPKQRRESAKAPSTENILKPEAAIDEQEQQEEGIRPHRFADYIGQKDLKDVLDIAIKAAKSRGEVLDHLLLYGPPGLGKTTMAMILASEMGVNYKITSAPALERPRDIVGLLVNMKPGDILFVDEIHRLSRMTEEILYPAMEDYRLDITIGKGSSARIRSLPLSKFTLVGATTRVGALTSPLRDRFGLIQKLRFYEVDELTQIVLRTAQLLKTPVTQDGATEIARRSRGTPRIANRLLKRVRDYAEVKVSGVINESIASEALQLFQVDPCGLDWTDRQMLSVIIEQFNGGPVGLETMAAATGEDTQTIEEVYEPYLMQIGYLTRTHRGRMATKAAYKHLGFTPPNEQLSLL.

The disordered stretch occupies residues 1–50 (MAIISSKKQPPEPNGEPKQRRESAKAPSTENILKPEAAIDEQEQQEEGIR). A large ATPase domain (RuvB-L) region spans residues 13 to 210 (PNGEPKQRRE…FGLIQKLRFY (198 aa)). Residues 15–24 (GEPKQRRESA) are compositionally biased toward basic and acidic residues. ATP-binding positions include isoleucine 49, arginine 50, glycine 91, lysine 94, threonine 95, threonine 96, 157–159 (EDY), arginine 200, tyrosine 210, and arginine 247. Threonine 95 is a binding site for Mg(2+). A small ATPAse domain (RuvB-S) region spans residues 211–281 (EVDELTQIVL…IASEALQLFQ (71 aa)). Positions 284-366 (PCGLDWTDRQ…TPPNEQLSLL (83 aa)) are head domain (RuvB-H). DNA contacts are provided by arginine 339 and arginine 344.

It belongs to the RuvB family. In terms of assembly, homohexamer. Forms an RuvA(8)-RuvB(12)-Holliday junction (HJ) complex. HJ DNA is sandwiched between 2 RuvA tetramers; dsDNA enters through RuvA and exits via RuvB. An RuvB hexamer assembles on each DNA strand where it exits the tetramer. Each RuvB hexamer is contacted by two RuvA subunits (via domain III) on 2 adjacent RuvB subunits; this complex drives branch migration. In the full resolvosome a probable DNA-RuvA(4)-RuvB(12)-RuvC(2) complex forms which resolves the HJ.

The protein resides in the cytoplasm. It carries out the reaction ATP + H2O = ADP + phosphate + H(+). Functionally, the RuvA-RuvB-RuvC complex processes Holliday junction (HJ) DNA during genetic recombination and DNA repair, while the RuvA-RuvB complex plays an important role in the rescue of blocked DNA replication forks via replication fork reversal (RFR). RuvA specifically binds to HJ cruciform DNA, conferring on it an open structure. The RuvB hexamer acts as an ATP-dependent pump, pulling dsDNA into and through the RuvAB complex. RuvB forms 2 homohexamers on either side of HJ DNA bound by 1 or 2 RuvA tetramers; 4 subunits per hexamer contact DNA at a time. Coordinated motions by a converter formed by DNA-disengaged RuvB subunits stimulates ATP hydrolysis and nucleotide exchange. Immobilization of the converter enables RuvB to convert the ATP-contained energy into a lever motion, pulling 2 nucleotides of DNA out of the RuvA tetramer per ATP hydrolyzed, thus driving DNA branch migration. The RuvB motors rotate together with the DNA substrate, which together with the progressing nucleotide cycle form the mechanistic basis for DNA recombination by continuous HJ branch migration. Branch migration allows RuvC to scan DNA until it finds its consensus sequence, where it cleaves and resolves cruciform DNA. This is Holliday junction branch migration complex subunit RuvB from Nostoc punctiforme (strain ATCC 29133 / PCC 73102).